A 709-amino-acid polypeptide reads, in one-letter code: Polyribonucleotide nucleotidyltransferase (709 aa).

Asp486 and Asp492 together coordinate Mg(2+). A KH domain is found at 553 to 612; the sequence is PRIHTIKINPDKIKDVIGKGGSVIRALTEETGTTIEIEDDGTVKIAATDGEKAKHAISRI. An S1 motif domain is found at 622 to 690; the sequence is ARIYTGKVTR…RQGRVRLSIK (69 aa).

The protein belongs to the polyribonucleotide nucleotidyltransferase family. As to quaternary structure, component of the RNA degradosome, which is a multiprotein complex involved in RNA processing and mRNA degradation. Mg(2+) serves as cofactor.

The protein resides in the cytoplasm. The catalysed reaction is RNA(n+1) + phosphate = RNA(n) + a ribonucleoside 5'-diphosphate. In terms of biological role, involved in mRNA degradation. Catalyzes the phosphorolysis of single-stranded polyribonucleotides processively in the 3'- to 5'-direction. In Photorhabdus laumondii subsp. laumondii (strain DSM 15139 / CIP 105565 / TT01) (Photorhabdus luminescens subsp. laumondii), this protein is Polyribonucleotide nucleotidyltransferase.